The following is a 420-amino-acid chain: Pregnancy-associated glycoprotein 2 (420 aa).

Residues 1–15 form the signal peptide; the sequence is MKWLVILGLVALSDC. N56 and N79 each carry an N-linked (GlcNAc...) asparagine glycan. In terms of domain architecture, Peptidase A1 spans 76–417; sequence YVGNISIGTP…DEGQNRIGLA (342 aa). D94 is a catalytic residue. Intrachain disulfides connect C107–C112 and C268–C272. D277 is an active-site residue. C341 and C376 are disulfide-bonded.

The protein belongs to the peptidase A1 family. As to expression, expressed throughout the chorion, with the signal localized exclusively over the trophectoderm.

It localises to the secreted. Its subcellular location is the extracellular space. The chain is Pregnancy-associated glycoprotein 2 (PAG2) from Sus scrofa (Pig).